The chain runs to 137 residues: Sporulation-specific cell division protein SsgB (137 aa).

The protein belongs to the SsgA family. Interacts with SsgA. Interacts with FtsZ (via N-terminus).

The protein resides in the cell septum. Involved in sporulation-specific cell division. Required for early stages of sporulation. Important in the process of growth cessation prior to sporulation-specific cell division. Recruits cell division protein FtsZ to the future septum sites and tethers the contractile ring structure (Z ring) to the cytoplasmic membrane during sporulation. Stimulates polymerization and filament length of FtsZ in vitro. This chain is Sporulation-specific cell division protein SsgB, found in Streptomyces coelicolor (strain ATCC BAA-471 / A3(2) / M145).